Reading from the N-terminus, the 2725-residue chain is Teneurin-1 (2725 aa).

Residues 1 to 48 (MEQTDCKPYQPLPKVKHEMDLAYTSSSDESEDGRKPRQSYNSRETLHE) form a disordered region. In terms of domain architecture, Teneurin N-terminal spans 1 to 318 (MEQTDCKPYQ…KPYRCCNWKC (318 aa)). The Cytoplasmic portion of the chain corresponds to 1-324 (MEQTDCKPYQ…NWKCTALSAT (324 aa)). A Nuclear localization signal (NLS) motif is present at residues 62 to 65 (RKRK). The residue at position 105 (serine 105) is a Phosphoserine. Position 109 is a phosphothreonine (threonine 109). Serine 116 carries the phosphoserine modification. Residues 174–189 (AGSTQDVQSSPHNQFT) show a composition bias toward polar residues. The disordered stretch occupies residues 174–241 (AGSTQDVQSS…PAPPTSTQDS (68 aa)). Residues 192–201 (PLPPPPPPPH) are compositionally biased toward pro residues. The short motif at 290–297 (PPPRPLPR) is the Required for interaction with SORBS1 (Ten-1 ICD form) element. A helical membrane pass occupies residues 325-345 (AITVTLALLLAYVIAVHLFGL). At 346-2725 (TWQLQPVEGE…FMRQSEIGRR (2380 aa)) the chain is on the extracellular side. Asparagine 433 is a glycosylation site (N-linked (GlcNAc...) asparagine). EGF-like domains are found at residues 528-559 (IMDD…PDCA), 560-591 (RDSC…ECDV), 592-624 (PEEQ…EICE), 625-657 (EEDC…NCET), 658-691 (PLPV…SDCS), 692-721 (TELC…GPTC), 722-753 (EERS…DHCT), and 761-796 (VRDG…TGCN). 22 disulfides stabilise this stretch: cysteine 532–cysteine 542, cysteine 536–cysteine 547, cysteine 549–cysteine 558, cysteine 567–cysteine 578, cysteine 580–cysteine 589, cysteine 596–cysteine 607, cysteine 601–cysteine 612, cysteine 614–cysteine 623, cysteine 628–cysteine 639, cysteine 633–cysteine 644, cysteine 646–cysteine 655, cysteine 666–cysteine 679, cysteine 681–cysteine 690, cysteine 695–cysteine 705, cysteine 699–cysteine 710, cysteine 712–cysteine 721, cysteine 726–cysteine 736, cysteine 730–cysteine 741, cysteine 743–cysteine 752, cysteine 765–cysteine 775, cysteine 769–cysteine 784, and cysteine 786–cysteine 795. N-linked (GlcNAc...) asparagine glycosylation is found at asparagine 905 and asparagine 1084. 5 NHL repeats span residues 1194–1219 (LFAP…VRRI), 1292–1336 (SHCG…NAVI), 1351–1402 (LSCD…IAGR), 1414–1458 (FLVS…VTTN), and 1481–1524 (CFSG…ISRN). One copy of the YD 1 repeat lies at 1534–1553 (YEIASPADQELYQFTVNGTH). Residues asparagine 1550 and asparagine 1567 are each glycosylated (N-linked (GlcNAc...) asparagine). 4 YD repeats span residues 1570-1590 (YNSE…VHIR), 1608-1632 (YWLT…ALMT), 1633-1654 (YPGN…TVYE), and 1655-1675 (YDPE…SSFH). Asparagine 1663, asparagine 1699, asparagine 1757, asparagine 1781, and asparagine 1842 each carry an N-linked (GlcNAc...) asparagine glycan. 11 YD repeats span residues 1845–1864 (YSPS…EKME), 1865–1885 (YDQS…WSYT), 1886–1904 (YLEK…YIFE), 1905–1925 (YDQP…HSLQ), 1933–1949 (YRNI…FIQD), 1950–1969 (YSRD…RRVL), 1970–1989 (YKYT…TQVT), 1992–2012 (YEES…FICT), 2015–2035 (YRQT…EGLV), 2085–2105 (YDLN…FSAN), and 2113–2133 (YEIL…VGRM). A glycan (N-linked (GlcNAc...) asparagine) is linked at asparagine 2145. YD repeat units follow at residues 2153 to 2173 (YDAD…WRYS), 2174 to 2194 (YDLN…LTPL), 2196 to 2216 (YDLR…DEDG), 2228 to 2248 (YNSN…TVQY), and 2250 to 2270 (YDGL…LQFF). The N-linked (GlcNAc...) asparagine glycan is linked to asparagine 2285. YD repeat units lie at residues 2296–2313 (YDLQ…GEEY) and 2314–2337 (YVAC…IKEI). The residue at position 2580 (serine 2580) is a Phosphoserine. N-linked (GlcNAc...) asparagine glycosylation is present at asparagine 2602.

The protein belongs to the tenascin family. Teneurin subfamily. As to quaternary structure, homodimer; disulfide-linked. Heterodimer with either TENM2 or TENM3. May also form heterodimer with TENM4. Ten-1 ICD interacts with SORBS1 (via third SH3 domain). Interacts with MBD1. Ten-1 ICD interacts with HINT1. Derives from the plasma membrane form by proteolytic processing. Further proteolytic cleavage may be generated. In terms of tissue distribution, expressed in fetal brain.

It is found in the cell membrane. Its subcellular location is the nucleus. The protein resides in the nucleus speckle. It localises to the nucleus matrix. The protein localises to the cytoplasm. It is found in the cytoskeleton. In terms of biological role, involved in neural development, regulating the establishment of proper connectivity within the nervous system. May function as a cellular signal transducer. Plays a role in the regulation of neuroplasticity in the limbic system. Mediates a rapid reorganization of actin- and tubulin-based cytoskeleton elements with an increase in dendritic arborization and spine density formation of neurons in the hippocampus and amygdala. Induces BDNF transcription inhibition in neurons. Activates the mitogen-activated protein (MAP) kinase 2 (MEK2) and extracellular signal-regulated kinase (ERK) cascade. Also acts as a bioactive neuroprotective peptide on limbic neurons of the brain and regulates stress-induced behavior: attenuates alkalosis-associated necrotic cell death and the effects of corticotropin-releasing factor (CRF) on c-fos/FOS induction and on the reinstatement of cocaine seeking. Functionally, induces gene transcription activation. The protein is Teneurin-1 (TENM1) of Homo sapiens (Human).